Consider the following 1908-residue polypeptide: Putative ankyrin repeat protein L484 (1908 aa).

ANK repeat units lie at residues 20–50, 60–97, 101–130, 134–167, and 1370–1399; these read DIMEQFFLTIKTGDIDKIRNFVAQNKNKFNI, PNKTPIHAVLELDDRIADQETKLTIIKYLDKMGAPMDL, DNVWPIHLAAADQDEDIIDYMLKNKVSIDR, SNNTPLHYAVYGKQVPCFDKVKVGSIVPPQDIDK, and DGNTPLHLAISMTNPDIVEILLKHGANPFT. The stretch at 1539–1603 forms a coiled coil; sequence VQLLNPKLRD…QTNISDLEFK (65 aa).

The protein localises to the virion. This chain is Putative ankyrin repeat protein L484, found in Acanthamoeba polyphaga mimivirus (APMV).